Reading from the N-terminus, the 1242-residue chain is Phosphorylase b kinase regulatory subunit alpha, skeletal muscle isoform (1242 aa).

Residues serine 630, serine 731, serine 737, serine 740, serine 760, serine 813, serine 974, serine 983, and serine 987 each carry the phosphoserine modification. Residues 812–842 (LSELYVKVGEIRHWGLIRYISGILRKKVEAL) are calmodulin-binding. Serine 1009 bears the Phosphoserine; by autocatalysis mark. At serine 1020 the chain carries Phosphoserine; by PKA. Residues serine 1022 and serine 1025 each carry the phosphoserine modification. Residues 1065-1105 (SKDSRQGQWQRRRRLDGALNRVPIGFYQKVWKILQKCHGLS) form a calmodulin-binding region. Serine 1132 is modified (phosphoserine). Residue cysteine 1239 is the site of S-farnesyl cysteine attachment.

Belongs to the phosphorylase b kinase regulatory chain family. As to quaternary structure, hexadecamer of 4 heterotetramers, each composed of alpha, beta, gamma, and delta subunits. Alpha (PHKA1 or PHKA2) and beta (PHKB) are regulatory subunits, gamma (PHKG1 or PHKG2) is the catalytic subunit, and delta is calmodulin. In terms of processing, although the final Cys may be farnesylated, the terminal tripeptide is probably not removed, and the C-terminus is not methylated.

Its subcellular location is the cell membrane. It functions in the pathway glycan biosynthesis; glycogen metabolism. Its activity is regulated as follows. By phosphorylation of various serine residues and by calcium. In terms of biological role, phosphorylase b kinase catalyzes the phosphorylation of serine in certain substrates, including troponin I. The alpha chain may bind calmodulin. This Rattus norvegicus (Rat) protein is Phosphorylase b kinase regulatory subunit alpha, skeletal muscle isoform (Phka1).